We begin with the raw amino-acid sequence, 185 residues long: Peptidyl-tRNA hydrolase (185 aa).

Residue tyrosine 14 participates in tRNA binding. Catalysis depends on histidine 19, which acts as the Proton acceptor. Residues tyrosine 65, asparagine 67, and asparagine 113 each contribute to the tRNA site.

This sequence belongs to the PTH family. In terms of assembly, monomer.

It is found in the cytoplasm. It carries out the reaction an N-acyl-L-alpha-aminoacyl-tRNA + H2O = an N-acyl-L-amino acid + a tRNA + H(+). Its function is as follows. Hydrolyzes ribosome-free peptidyl-tRNAs (with 1 or more amino acids incorporated), which drop off the ribosome during protein synthesis, or as a result of ribosome stalling. Functionally, catalyzes the release of premature peptidyl moieties from peptidyl-tRNA molecules trapped in stalled 50S ribosomal subunits, and thus maintains levels of free tRNAs and 50S ribosomes. The polypeptide is Peptidyl-tRNA hydrolase (Rickettsia canadensis (strain McKiel)).